A 382-amino-acid chain; its full sequence is Homeobox protein bagpipe (382 aa).

3 disordered regions span residues 27 to 66 (NDIL…SKSP), 144 to 178 (TSND…KKRS), and 314 to 382 (QPIP…VEID). Basic and acidic residues predominate over residues 48 to 62 (EPEKLKPSSDRERSI). Residues 158-170 (SSPSESPLSHDGS) show a composition bias toward low complexity. Residues 175–234 (KKRSRAAFSHAQVFELERRFAQQRYLSGPERSEMAKSLRLTETQVKIWFQNRRYKTKRKQ) constitute a DNA-binding region (homeobox). Low complexity predominate over residues 321-335 (QSSSFVTASSASSSP). Over residues 373–382 (EDVDENVEID) the composition is skewed to acidic residues.

This sequence belongs to the NK-3 homeobox family. In terms of tissue distribution, is expressed in a segmented pattern in visceral muscle and in a subset of cardiac muscles. Loss of activity results in segmental gaps in midgut visceral muscle.

The protein localises to the nucleus. In terms of biological role, involved in the determination of cell fates in the dorsal mesoderm. This Drosophila melanogaster (Fruit fly) protein is Homeobox protein bagpipe (bap).